A 227-amino-acid polypeptide reads, in one-letter code: Cytochrome c oxidase subunit 2 (227 aa).

The Mitochondrial intermembrane portion of the chain corresponds to 1-14 (MANHSQLGFQDASS). A helical membrane pass occupies residues 15–45 (PIMEELVEFHDHALMVALAICSLVLYLLTLM). Over 46–58 (LTQKLSSNTVDAQ) the chain is Mitochondrial matrix. Residues 59-86 (EVELIWTILPAIVLVLLALPSLQILYMM) form a helical membrane-spanning segment. At 87–227 (DEIEEPDLTL…FETWSSLLSS (141 aa)) the chain is on the mitochondrial intermembrane side. Cu cation-binding residues include H160, C195, E197, C199, H203, and M206. E197 provides a ligand contact to Mg(2+).

This sequence belongs to the cytochrome c oxidase subunit 2 family. As to quaternary structure, component of the cytochrome c oxidase (complex IV, CIV), a multisubunit enzyme composed of 14 subunits. The complex is composed of a catalytic core of 3 subunits MT-CO1, MT-CO2 and MT-CO3, encoded in the mitochondrial DNA, and 11 supernumerary subunits COX4I, COX5A, COX5B, COX6A, COX6B, COX6C, COX7A, COX7B, COX7C, COX8 and NDUFA4, which are encoded in the nuclear genome. The complex exists as a monomer or a dimer and forms supercomplexes (SCs) in the inner mitochondrial membrane with NADH-ubiquinone oxidoreductase (complex I, CI) and ubiquinol-cytochrome c oxidoreductase (cytochrome b-c1 complex, complex III, CIII), resulting in different assemblies (supercomplex SCI(1)III(2)IV(1) and megacomplex MCI(2)III(2)IV(2)). Found in a complex with TMEM177, COA6, COX18, COX20, SCO1 and SCO2. Interacts with TMEM177 in a COX20-dependent manner. Interacts with COX20. Interacts with COX16. Cu cation is required as a cofactor.

It localises to the mitochondrion inner membrane. It carries out the reaction 4 Fe(II)-[cytochrome c] + O2 + 8 H(+)(in) = 4 Fe(III)-[cytochrome c] + 2 H2O + 4 H(+)(out). Its function is as follows. Component of the cytochrome c oxidase, the last enzyme in the mitochondrial electron transport chain which drives oxidative phosphorylation. The respiratory chain contains 3 multisubunit complexes succinate dehydrogenase (complex II, CII), ubiquinol-cytochrome c oxidoreductase (cytochrome b-c1 complex, complex III, CIII) and cytochrome c oxidase (complex IV, CIV), that cooperate to transfer electrons derived from NADH and succinate to molecular oxygen, creating an electrochemical gradient over the inner membrane that drives transmembrane transport and the ATP synthase. Cytochrome c oxidase is the component of the respiratory chain that catalyzes the reduction of oxygen to water. Electrons originating from reduced cytochrome c in the intermembrane space (IMS) are transferred via the dinuclear copper A center (CU(A)) of subunit 2 and heme A of subunit 1 to the active site in subunit 1, a binuclear center (BNC) formed by heme A3 and copper B (CU(B)). The BNC reduces molecular oxygen to 2 water molecules using 4 electrons from cytochrome c in the IMS and 4 protons from the mitochondrial matrix. The chain is Cytochrome c oxidase subunit 2 (MT-CO2) from Coturnix japonica (Japanese quail).